The primary structure comprises 340 residues: uncharacterized protein (340 aa).

This is an uncharacterized protein from Enterobacteria phage T4 (Bacteriophage T4).